We begin with the raw amino-acid sequence, 350 residues long: MPVLHNRISNDALKAKMLAESEPRITISFYKYFHIADPKATRDALYQLFTALDVFGRVYLAHEGINAQISVPASNVETFRAQLYAFDPALEGLRLNIALDDDGKSFWVLRMKVRDRIVSDGIDDPHFDASNVGEYLQAAEVNAMLDDPDALFIDMRNHYEYEVGHFENALEIPADTFREQLPKAVEMMQAHKDKKIVMYCTGGIRCEKASAWMKHNGFNKVWHIEGGIIEYARKAREQGLPVRFIGKNFVFDERMGERISDEIIAHCHQCGAPCDSHTNCKNDGCHLLFIQCPVCAEKYKGCCSEICCEESALPPEEQRRRRAGRENSNKIFNKSRGRLNTTLGIPDPTE.

The Rhodanese domain maps to 146-240 (DDPDALFIDM…YARKAREQGL (95 aa)). The active-site Cysteine persulfide intermediate is Cys200.

It belongs to the TrhO family.

It carries out the reaction uridine(34) in tRNA + AH2 + O2 = 5-hydroxyuridine(34) in tRNA + A + H2O. Its function is as follows. Catalyzes oxygen-dependent 5-hydroxyuridine (ho5U) modification at position 34 in tRNAs, the first step in 5-carboxymethoxyuridine (cmo5U) biosynthesis. May be part of an alternate pathway, which is able to bypass cmo5U biogenesis in a subset of tRNAs under aerobic conditions. This is tRNA uridine(34) hydroxylase from Escherichia coli O127:H6 (strain E2348/69 / EPEC).